The primary structure comprises 378 residues: Putative odorant receptor 71a (378 aa).

Residues 1 to 37 (MDYDRIRPVRFLTGVLKWWRLWPRKESVSTPDWTNWQ) lie on the Cytoplasmic side of the membrane. A helical transmembrane segment spans residues 38–58 (AYALHVPFTFLFVLLLWLEAI). The Extracellular portion of the chain corresponds to 59–66 (KSRDIQHT). A helical membrane pass occupies residues 67 to 87 (ADVLLICLTTTALGGKVINIW). At 88-127 (KYAHVAQGILSEWSTWDLFELRSKQEVDMWRFEHRRFNRV) the chain is on the cytoplasmic side. A helical membrane pass occupies residues 128–148 (FMFYCLCSAGVIPFIVIQPLF). The Extracellular portion of the chain corresponds to 149 to 166 (DIPNRLPFWMWTPFDWQQ). A helical transmembrane segment spans residues 167 to 187 (PVLFWYAFIYQATTIPIACAC). Residues 188–255 (NVTMDAVNWY…IFISKSTFTQ (68 aa)) are Cytoplasmic-facing. A helical membrane pass occupies residues 256-276 (ILVSSLIICFTIYSMQMSPVL). The Extracellular portion of the chain corresponds to 277–280 (QDLP). A helical transmembrane segment spans residues 281–301 (GFAAMMQYLVAMIMQVMLPTI). At 302–343 (YGNAVIDSANMLTDSMYNSDWPDMNCRMRRLVLMFMVYLNRP) the chain is on the cytoplasmic side. A helical membrane pass occupies residues 344–364 (VTLKAGGFFHIGLPLFTKTMN). Topologically, residues 365–378 (QAYSLLALLLNMNQ) are extracellular.

Belongs to the insect chemoreceptor superfamily. Heteromeric odorant receptor channel (TC 1.A.69) family. Or2a subfamily. As to quaternary structure, interacts with Orco. Complexes exist early in the endomembrane system in olfactory sensory neurons (OSNs), coupling these complexes to the conserved ciliary trafficking pathway. Expressed in olfactory sensory neurons in the maxillary palp.

It is found in the cell membrane. Odorant receptor which mediates acceptance or avoidance behavior, depending on its substrates. The odorant receptor repertoire encodes a large collection of odor stimuli that vary widely in identity, intensity, and duration. May form a complex with Orco to form odorant-sensing units, providing sensitive and prolonged odorant signaling and calcium permeability. In Drosophila melanogaster (Fruit fly), this protein is Putative odorant receptor 71a (Or71a).